Here is an 85-residue protein sequence, read N- to C-terminus: Type 3 secretion system needle filament protein (85 aa).

Positions 13-41 form a coiled coil; sequence LDTVANALKEQANAANKDVNDAIKALQGT.

In terms of assembly, the core secretion machinery of the T3SS is composed of approximately 20 different proteins, including cytoplasmic components, a base, an export apparatus and a needle. This subunit polymerizes and forms the helical needle filament. Forms a stable heterotrimeric complex with PscE and PscG in the cytoplasm, blocking it in a monomeric state and preventing its polymerization.

It localises to the secreted. The protein resides in the cell surface. Functionally, component of the type III secretion system (T3SS), also called injectisome, which is used to inject bacterial effector proteins into eukaryotic host cells, facilitating the establishment and dissemination of infection. PscF/SctF forms the external needle filament that protrudes from the bacterial surface. The polypeptide is Type 3 secretion system needle filament protein (Pseudomonas aeruginosa (strain ATCC 15692 / DSM 22644 / CIP 104116 / JCM 14847 / LMG 12228 / 1C / PRS 101 / PAO1)).